The chain runs to 341 residues: Heme A synthase (341 aa).

A run of 8 helical transmembrane segments spans residues 7 to 27 (VTVWLGVCCSMTLLMVVIGGI), 92 to 112 (LFGRALGAVFCLPIPYFAITK), 118 to 138 (MVAKLLIVALLGGMQGAMGWF), 159 to 179 (LFLTILLFSILWHSFLRCAGV), 190 to 210 (FFTAAAVVGLTVLQMVLGALV), 253 to 273 (FLHRLVAVLIVVCAAPLPFWL), 280 to 300 (LFLACVALQFLLGVATLVSVV), and 302 to 322 (IFLAAMHQVFGFVTLAAGVHM). Residue His-255 participates in heme binding. Position 308 (His-308) interacts with heme.

Belongs to the COX15/CtaA family. Type 2 subfamily. Interacts with CtaB. It depends on heme b as a cofactor.

The protein resides in the cell membrane. The enzyme catalyses Fe(II)-heme o + 2 A + H2O = Fe(II)-heme a + 2 AH2. Its pathway is porphyrin-containing compound metabolism; heme A biosynthesis; heme A from heme O: step 1/1. In terms of biological role, catalyzes the conversion of heme O to heme A by two successive hydroxylations of the methyl group at C8. The first hydroxylation forms heme I, the second hydroxylation results in an unstable dihydroxymethyl group, which spontaneously dehydrates, resulting in the formyl group of heme A. In Anaplasma marginale (strain St. Maries), this protein is Heme A synthase.